The following is a 155-amino-acid chain: Small ribosomal subunit protein uS7 (155 aa).

It belongs to the universal ribosomal protein uS7 family. As to quaternary structure, part of the 30S ribosomal subunit. Contacts proteins S9 and S11.

Its function is as follows. One of the primary rRNA binding proteins, it binds directly to 16S rRNA where it nucleates assembly of the head domain of the 30S subunit. Is located at the subunit interface close to the decoding center, probably blocks exit of the E-site tRNA. The sequence is that of Small ribosomal subunit protein uS7 from Helicobacter acinonychis (strain Sheeba).